Reading from the N-terminus, the 146-residue chain is MGNRLNGSYLSNTDMSIEDKQNKYNEAIEDCKICNKVYIKQSGKIDKKELTRIKKLDFFYSQKSDHEIERMFFNVPNGTFLLTDDATNENLFIAQKDLENGSLNIAKLEFKGKALYIDGKDYFSLENYLKTFEDFYKYPLIYNKNE.

It belongs to the asfivirus MGF 100 family.

In terms of biological role, plays a role in virus cell tropism, and may be required for efficient virus replication in macrophages. This Ornithodoros (relapsing fever ticks) protein is Protein MGF 100-3L.